The primary structure comprises 165 residues: Chorismate pyruvate-lyase (165 aa).

Substrate contacts are provided by Met35, Arg77, Leu115, and Glu156.

Belongs to the UbiC family. Monomer.

The protein localises to the cytoplasm. The enzyme catalyses chorismate = 4-hydroxybenzoate + pyruvate. Its pathway is cofactor biosynthesis; ubiquinone biosynthesis. Its function is as follows. Removes the pyruvyl group from chorismate, with concomitant aromatization of the ring, to provide 4-hydroxybenzoate (4HB) for the ubiquinone pathway. The protein is Chorismate pyruvate-lyase of Escherichia coli O7:K1 (strain IAI39 / ExPEC).